The sequence spans 124 residues: ATP synthase epsilon chain (124 aa).

This sequence belongs to the ATPase epsilon chain family. F-type ATPases have 2 components, CF(1) - the catalytic core - and CF(0) - the membrane proton channel. CF(1) has five subunits: alpha(3), beta(3), gamma(1), delta(1), epsilon(1). CF(0) has three main subunits: a, b and c.

The protein localises to the cell membrane. Functionally, produces ATP from ADP in the presence of a proton gradient across the membrane. The protein is ATP synthase epsilon chain of Corynebacterium efficiens (strain DSM 44549 / YS-314 / AJ 12310 / JCM 11189 / NBRC 100395).